A 447-amino-acid polypeptide reads, in one-letter code: Folate synthesis bifunctional protein (447 aa).

An HPPK region spans residues 1 to 165 (MTTAQFICLS…SFGEIAHLLP (165 aa)). A Pterin-binding domain is found at 179 to 438 (TLLMGVVNVT…DVEANQRVLS (260 aa)). The DHPS stretch occupies residues 181–447 (LMGVVNVTDN…SAAAWSGVHV (267 aa)). Asn-186 serves as a coordination point for Mg(2+). (7,8-dihydropterin-6-yl)methyl diphosphate is bound by residues Thr-226, Asp-266, Asn-286, Asp-356, Lys-392, and 426–428 (RVH).

This sequence in the C-terminal section; belongs to the DHPS family. The protein in the N-terminal section; belongs to the HPPK family. Mg(2+) serves as cofactor.

The enzyme catalyses 6-hydroxymethyl-7,8-dihydropterin + ATP = (7,8-dihydropterin-6-yl)methyl diphosphate + AMP + H(+). The catalysed reaction is (7,8-dihydropterin-6-yl)methyl diphosphate + 4-aminobenzoate = 7,8-dihydropteroate + diphosphate. The protein operates within cofactor biosynthesis; tetrahydrofolate biosynthesis; 2-amino-4-hydroxy-6-hydroxymethyl-7,8-dihydropteridine diphosphate from 7,8-dihydroneopterin triphosphate: step 4/4. It functions in the pathway cofactor biosynthesis; tetrahydrofolate biosynthesis; 7,8-dihydrofolate from 2-amino-4-hydroxy-6-hydroxymethyl-7,8-dihydropteridine diphosphate and 4-aminobenzoate: step 1/2. This is Folate synthesis bifunctional protein (folKP) from Chlamydia caviae (strain ATCC VR-813 / DSM 19441 / 03DC25 / GPIC) (Chlamydophila caviae).